A 369-amino-acid chain; its full sequence is Phosphoribosyl pyrophosphate synthase-associated protein 2 (369 aa).

Position 1 is an N-acetylmethionine (Met1). A phosphoserine mark is found at Ser219, Ser227, and Ser233.

The protein belongs to the ribose-phosphate pyrophosphokinase family. Binds to PRPS1 and PRPS2.

Its function is as follows. Seems to play a negative regulatory role in 5-phosphoribose 1-diphosphate synthesis. In Mus musculus (Mouse), this protein is Phosphoribosyl pyrophosphate synthase-associated protein 2 (Prpsap2).